Consider the following 450-residue polypeptide: Phosphoglucosamine mutase (450 aa).

Ser-102 functions as the Phosphoserine intermediate in the catalytic mechanism. Mg(2+)-binding residues include Ser-102, Asp-244, Asp-246, and Asp-248. Ser-102 is subject to Phosphoserine.

Belongs to the phosphohexose mutase family. It depends on Mg(2+) as a cofactor. Post-translationally, activated by phosphorylation.

The catalysed reaction is alpha-D-glucosamine 1-phosphate = D-glucosamine 6-phosphate. Catalyzes the conversion of glucosamine-6-phosphate to glucosamine-1-phosphate. The chain is Phosphoglucosamine mutase from Solidesulfovibrio magneticus (strain ATCC 700980 / DSM 13731 / RS-1) (Desulfovibrio magneticus).